The sequence spans 246 residues: Pyridoxine 5'-phosphate synthase (246 aa).

Asn12 contributes to the 3-amino-2-oxopropyl phosphate binding site. Residue 14 to 15 (DH) participates in 1-deoxy-D-xylulose 5-phosphate binding. Residue Arg23 participates in 3-amino-2-oxopropyl phosphate binding. The active-site Proton acceptor is His48. Residues Arg50 and His55 each contribute to the 1-deoxy-D-xylulose 5-phosphate site. Residue Glu75 is the Proton acceptor of the active site. A 1-deoxy-D-xylulose 5-phosphate-binding site is contributed by Thr105. His196 functions as the Proton donor in the catalytic mechanism. 3-amino-2-oxopropyl phosphate-binding positions include Gly197 and 218–219 (GH).

This sequence belongs to the PNP synthase family. In terms of assembly, homooctamer; tetramer of dimers.

It localises to the cytoplasm. It carries out the reaction 3-amino-2-oxopropyl phosphate + 1-deoxy-D-xylulose 5-phosphate = pyridoxine 5'-phosphate + phosphate + 2 H2O + H(+). The protein operates within cofactor biosynthesis; pyridoxine 5'-phosphate biosynthesis; pyridoxine 5'-phosphate from D-erythrose 4-phosphate: step 5/5. In terms of biological role, catalyzes the complicated ring closure reaction between the two acyclic compounds 1-deoxy-D-xylulose-5-phosphate (DXP) and 3-amino-2-oxopropyl phosphate (1-amino-acetone-3-phosphate or AAP) to form pyridoxine 5'-phosphate (PNP) and inorganic phosphate. The protein is Pyridoxine 5'-phosphate synthase of Nitrosococcus oceani (strain ATCC 19707 / BCRC 17464 / JCM 30415 / NCIMB 11848 / C-107).